Consider the following 155-residue polypeptide: Transcriptional repressor NrdR (155 aa).

A zinc finger lies at 3–34; it reads CPFCGHSNTQVLDTRMSEDGDAVRRRRRCEAC. Residues 49-139 enclose the ATP-cone domain; the sequence is PAIVKKNGSR…VYRSFEDVSE (91 aa).

The protein belongs to the NrdR family. The cofactor is Zn(2+).

Its function is as follows. Negatively regulates transcription of bacterial ribonucleotide reductase nrd genes and operons by binding to NrdR-boxes. In Cupriavidus necator (strain ATCC 17699 / DSM 428 / KCTC 22496 / NCIMB 10442 / H16 / Stanier 337) (Ralstonia eutropha), this protein is Transcriptional repressor NrdR.